The sequence spans 435 residues: Asparagine--tRNA ligase (435 aa).

It belongs to the class-II aminoacyl-tRNA synthetase family. As to quaternary structure, homodimer.

The protein resides in the cytoplasm. It catalyses the reaction tRNA(Asn) + L-asparagine + ATP = L-asparaginyl-tRNA(Asn) + AMP + diphosphate + H(+). In Leptospira interrogans serogroup Icterohaemorrhagiae serovar copenhageni (strain Fiocruz L1-130), this protein is Asparagine--tRNA ligase.